The sequence spans 500 residues: Glutamate--tRNA ligase (500 aa).

A 'HIGH' region motif is present at residues 12–22; it reads PSPTGHLHIGN. Positions 259-263 match the 'KMSKS' region motif; it reads KLSKR. Lysine 262 is an ATP binding site.

The protein belongs to the class-I aminoacyl-tRNA synthetase family. Glutamate--tRNA ligase type 1 subfamily. As to quaternary structure, monomer.

The protein resides in the cytoplasm. The catalysed reaction is tRNA(Glu) + L-glutamate + ATP = L-glutamyl-tRNA(Glu) + AMP + diphosphate. In terms of biological role, catalyzes the attachment of glutamate to tRNA(Glu) in a two-step reaction: glutamate is first activated by ATP to form Glu-AMP and then transferred to the acceptor end of tRNA(Glu). The chain is Glutamate--tRNA ligase from Lactobacillus delbrueckii subsp. bulgaricus (strain ATCC 11842 / DSM 20081 / BCRC 10696 / JCM 1002 / NBRC 13953 / NCIMB 11778 / NCTC 12712 / WDCM 00102 / Lb 14).